A 430-amino-acid chain; its full sequence is Tol-Pal system protein TolB (430 aa).

The signal sequence occupies residues 1–21 (MKQALRVAVSFFMLWAAVLHA).

It belongs to the TolB family. In terms of assembly, the Tol-Pal system is composed of five core proteins: the inner membrane proteins TolA, TolQ and TolR, the periplasmic protein TolB and the outer membrane protein Pal. They form a network linking the inner and outer membranes and the peptidoglycan layer.

It localises to the periplasm. Part of the Tol-Pal system, which plays a role in outer membrane invagination during cell division and is important for maintaining outer membrane integrity. TolB occupies a key intermediary position in the Tol-Pal system because it communicates directly with both membrane-embedded components, Pal in the outer membrane and TolA in the inner membrane. This Enterobacter sp. (strain 638) protein is Tol-Pal system protein TolB.